Here is a 740-residue protein sequence, read N- to C-terminus: Ion-translocating oxidoreductase complex subunit C (740 aa).

4Fe-4S ferredoxin-type domains follow at residues 369–397 and 407–436; these read GEPQ…QQLY and KATT…VQYF. Cys377, Cys380, Cys383, Cys387, Cys416, Cys419, Cys422, and Cys426 together coordinate [4Fe-4S] cluster. The interval 602 to 714 is disordered; the sequence is KLEQQQANAE…NAEPEEQIDP (113 aa). Residues 605–615 show a composition bias toward low complexity; that stretch reads QQQANAEPEQQ.

This sequence belongs to the 4Fe4S bacterial-type ferredoxin family. RnfC subfamily. The complex is composed of six subunits: RsxA, RsxB, RsxC, RsxD, RsxE and RsxG. The cofactor is [4Fe-4S] cluster.

It localises to the cell inner membrane. Its function is as follows. Part of a membrane-bound complex that couples electron transfer with translocation of ions across the membrane. Required to maintain the reduced state of SoxR. This chain is Ion-translocating oxidoreductase complex subunit C, found in Escherichia coli O17:K52:H18 (strain UMN026 / ExPEC).